The sequence spans 283 residues: Small ribosomal subunit protein uS2 (283 aa).

The tract at residues 229-283 (RSAGKSGEQPAEAEPMPDWERELLEGDGAKTEAKAEEPKAEAKKADEAPEAEKSN) is disordered. Residues 246–283 (DWERELLEGDGAKTEAKAEEPKAEAKKADEAPEAEKSN) are compositionally biased toward basic and acidic residues.

It belongs to the universal ribosomal protein uS2 family.

The protein is Small ribosomal subunit protein uS2 of Cutibacterium acnes (strain DSM 16379 / KPA171202) (Propionibacterium acnes).